The following is a 372-amino-acid chain: Tetraacyldisaccharide 4'-kinase (372 aa).

Residue 60–67 (TVGGSGKT) participates in ATP binding.

It belongs to the LpxK family.

The enzyme catalyses a lipid A disaccharide + ATP = a lipid IVA + ADP + H(+). It functions in the pathway glycolipid biosynthesis; lipid IV(A) biosynthesis; lipid IV(A) from (3R)-3-hydroxytetradecanoyl-[acyl-carrier-protein] and UDP-N-acetyl-alpha-D-glucosamine: step 6/6. Its function is as follows. Transfers the gamma-phosphate of ATP to the 4'-position of a tetraacyldisaccharide 1-phosphate intermediate (termed DS-1-P) to form tetraacyldisaccharide 1,4'-bis-phosphate (lipid IVA). This chain is Tetraacyldisaccharide 4'-kinase, found in Psychrobacter cryohalolentis (strain ATCC BAA-1226 / DSM 17306 / VKM B-2378 / K5).